The primary structure comprises 66 residues: Large ribosomal subunit protein bL35 (66 aa).

The span at 18–27 (ATGKIKSTQS) shows a compositional bias: polar residues. Residues 18–41 (ATGKIKSTQSAKRHGMTKRSKRSI) form a disordered region. The segment covering 28–41 (AKRHGMTKRSKRSI) has biased composition (basic residues).

This sequence belongs to the bacterial ribosomal protein bL35 family.

The chain is Large ribosomal subunit protein bL35 from Ehrlichia ruminantium (strain Gardel).